A 136-amino-acid polypeptide reads, in one-letter code: Holo-[acyl-carrier-protein] synthase (136 aa).

Mg(2+) is bound by residues Asp8 and Glu58.

The protein belongs to the P-Pant transferase superfamily. AcpS family. Mg(2+) is required as a cofactor.

It is found in the cytoplasm. The enzyme catalyses apo-[ACP] + CoA = holo-[ACP] + adenosine 3',5'-bisphosphate + H(+). Functionally, transfers the 4'-phosphopantetheine moiety from coenzyme A to a Ser of acyl-carrier-protein. This chain is Holo-[acyl-carrier-protein] synthase, found in Leuconostoc mesenteroides subsp. mesenteroides (strain ATCC 8293 / DSM 20343 / BCRC 11652 / CCM 1803 / JCM 6124 / NCDO 523 / NBRC 100496 / NCIMB 8023 / NCTC 12954 / NRRL B-1118 / 37Y).